A 283-amino-acid chain; its full sequence is NAD kinase (283 aa).

The Proton acceptor role is filled by Asp68. NAD(+) contacts are provided by residues 68 to 69 (DG), Arg73, 142 to 143 (ND), Arg153, Arg170, Asp172, and 183 to 188 (TAYSLS).

This sequence belongs to the NAD kinase family. A divalent metal cation serves as cofactor.

The protein localises to the cytoplasm. The enzyme catalyses NAD(+) + ATP = ADP + NADP(+) + H(+). In terms of biological role, involved in the regulation of the intracellular balance of NAD and NADP, and is a key enzyme in the biosynthesis of NADP. Catalyzes specifically the phosphorylation on 2'-hydroxyl of the adenosine moiety of NAD to yield NADP. The polypeptide is NAD kinase (Symbiobacterium thermophilum (strain DSM 24528 / JCM 14929 / IAM 14863 / T)).